The sequence spans 654 residues: Fimbrin-2 (654 aa).

4 Calponin-homology (CH) domains span residues 124–241 (DSEK…KIQL), 269–372 (LPPE…QHRN), 394–500 (SREE…RYNI), and 515–623 (EITD…YWTL). Actin-binding stretches follow at residues 124–372 (DSEK…QHRN) and 394–623 (SREE…YWTL).

In terms of assembly, interacts with F-actin.

It is found in the cytoplasm. The protein localises to the cytoskeleton. Functionally, cross-links actin filaments (F-actin). Stabilizes and prevents F-actin depolymerization mediated by profilin. May regulate actin cytoarchitecture, cell cycle, cell division, cell elongation and cytoplasmic tractus. The polypeptide is Fimbrin-2 (Arabidopsis thaliana (Mouse-ear cress)).